A 561-amino-acid chain; its full sequence is Oxygen-dependent choline dehydrogenase (561 aa).

Residue 7–36 (DYIIVGAGSAGNVLASRLAEDADVTVLLLE) participates in FAD binding. Residue histidine 474 is the Proton acceptor of the active site.

The protein belongs to the GMC oxidoreductase family. Requires FAD as cofactor.

It catalyses the reaction choline + A = betaine aldehyde + AH2. It carries out the reaction betaine aldehyde + NAD(+) + H2O = glycine betaine + NADH + 2 H(+). It participates in amine and polyamine biosynthesis; betaine biosynthesis via choline pathway; betaine aldehyde from choline (cytochrome c reductase route): step 1/1. Functionally, involved in the biosynthesis of the osmoprotectant glycine betaine. Catalyzes the oxidation of choline to betaine aldehyde and betaine aldehyde to glycine betaine at the same rate. The chain is Oxygen-dependent choline dehydrogenase from Paraburkholderia xenovorans (strain LB400).